A 370-amino-acid polypeptide reads, in one-letter code: tRNA 2-selenouridine synthase (370 aa).

One can recognise a Rhodanese domain in the interval 12–136 (FLDDVPMMDM…MRTFLLETTQ (125 aa)). C95 acts as the S-selanylcysteine intermediate in catalysis.

Belongs to the SelU family. In terms of assembly, monomer.

It catalyses the reaction 5-methylaminomethyl-2-thiouridine(34) in tRNA + selenophosphate + (2E)-geranyl diphosphate + H2O + H(+) = 5-methylaminomethyl-2-selenouridine(34) in tRNA + (2E)-thiogeraniol + phosphate + diphosphate. The catalysed reaction is 5-methylaminomethyl-2-thiouridine(34) in tRNA + (2E)-geranyl diphosphate = 5-methylaminomethyl-S-(2E)-geranyl-thiouridine(34) in tRNA + diphosphate. The enzyme catalyses 5-methylaminomethyl-S-(2E)-geranyl-thiouridine(34) in tRNA + selenophosphate + H(+) = 5-methylaminomethyl-2-(Se-phospho)selenouridine(34) in tRNA + (2E)-thiogeraniol. It carries out the reaction 5-methylaminomethyl-2-(Se-phospho)selenouridine(34) in tRNA + H2O = 5-methylaminomethyl-2-selenouridine(34) in tRNA + phosphate. Involved in the post-transcriptional modification of the uridine at the wobble position (U34) of tRNA(Lys), tRNA(Glu) and tRNA(Gln). Catalyzes the conversion of 2-thiouridine (S2U-RNA) to 2-selenouridine (Se2U-RNA). Acts in a two-step process involving geranylation of 2-thiouridine (S2U) to S-geranyl-2-thiouridine (geS2U) and subsequent selenation of the latter derivative to 2-selenouridine (Se2U) in the tRNA chain. The chain is tRNA 2-selenouridine synthase from Pseudomonas putida (strain ATCC 47054 / DSM 6125 / CFBP 8728 / NCIMB 11950 / KT2440).